The chain runs to 770 residues: MTLAKIELLKQLLRDNEAKTVLRQTTVDQYNIIRKFNTSRIEKNPSLRMKWAMCSNFPLALTKGDMANRIPLEYKGIQLKTNAEDIGTKGQMCSIAAVTWWNTYGPIGDTEGFEKVYESFFLRKMRLDNATWGRITFGPVERVRKRVLLNPLTKEMPPDEASNVIMEILFPKEAGIPRESTWIHRELIKEKREKLKGTMITPIVLAYMLERELVARRRFLPVAGATSAEFIEMLHCLQGENWRQIYHPGGNKLTESRSQSMIVACRKIIRRSIVASNPLELAVEIANKTVIDTEPLKSCLAALDGGDVACDIIRAALGLKIRQRQRFGRLELKRISGRGFKNDEEILIGNGTIQKIGIWDGEEEFHVRCGECRGILKKSQMRMEKLLINSAKKEDMKDLIILCMVFSQDTRMFQGVRGEINFLNRAGQLLSPMYQLQRYFLNRSNDLFDQWGYEESPKASELHGINELMNASDYTLKGVVVTKNVIDDFSSTETEKVSITKNLSLIKRTGEVIMGANDVSELESQAQLMITYDTPKMWEMGTTKELVQNTYQWVLKNLVTLKAQFLLGKEDMFQWDAFEAFESIIPQKMAGQYSGFARAVLKQMRDQEVMKTDQFIKLLPFCFSPPKLRSNGEPYQFLRLMLKGGGENFIEVRKGSPLFSYNPQTEILTICGRMMSLKGKIEDEERNRSMGNAVLAGFLVSGKYDPDLGDFKTIEELERLKPGEKANILLYQGKPVKVVKRKRYSALSNDISQGIKRQRMTVESMGWALS.

The short motif at 740-743 (KRKR) is the Nuclear localization signal element.

The protein belongs to the influenza viruses PB2 family. As to quaternary structure, influenza RNA polymerase is composed of three subunits: PB1, PB2 and PA. Interacts (via N-terminus) with PB1 (via C-terminus). Interacts with nucleoprotein NP (via N-terminus). Interacts with host ANP32A (via C-terminus) and ANP32B; these interactions promote viral RNA synthesis.

The protein resides in the virion. It localises to the host nucleus. Plays an essential role in transcription initiation and cap-stealing mechanism, in which cellular capped pre-mRNAs are used to generate primers for viral transcription. Recognizes and binds a wide range of cap structures of target pre-RNAs which are subsequently cleaved after 10-13 nucleotides by the viral protein PA. Plays a role in the initiation of the viral genome replication and modulates the activity of the ribonucleoprotein (RNP) complex. The sequence is that of Polymerase basic protein 2 from Influenza B virus (strain B/Lee/1940).